The following is a 655-amino-acid chain: Chaperone protein dnaK1 (655 aa).

The residue at position 197 (Thr-197) is a Phosphothreonine; by autocatalysis.

The protein belongs to the heat shock protein 70 family.

In terms of biological role, acts as a chaperone. This chain is Chaperone protein dnaK1 (dnaK1), found in Synechococcus elongatus (strain ATCC 33912 / PCC 7942 / FACHB-805) (Anacystis nidulans R2).